A 406-amino-acid chain; its full sequence is COP9 signalosome complex subunit 4 (406 aa).

Positions Tyr-197–Pro-366 constitute a PCI domain.

It belongs to the CSN4 family. Component of the CSN complex, probably composed of cops1, cops2, cops3, cops4, cops5, cops6, cops7, cops8 and cops9.

The protein resides in the cytoplasm. It is found in the nucleus. The protein localises to the cytoplasmic vesicle. It localises to the secretory vesicle. Its subcellular location is the synaptic vesicle. Component of the COP9 signalosome complex (CSN), a complex involved in various cellular and developmental processes. The CSN complex is an essential regulator of the ubiquitin (Ubl) conjugation pathway by mediating the deneddylation of the cullin subunits of E3 ligase complexes, leading to modify the Ubl ligase activity. The chain is COP9 signalosome complex subunit 4 (cops4) from Danio rerio (Zebrafish).